The chain runs to 128 residues: Large ribosomal subunit protein uL22 (128 aa).

It belongs to the universal ribosomal protein uL22 family. As to quaternary structure, part of the 50S ribosomal subunit.

Functionally, this protein binds specifically to 23S rRNA; its binding is stimulated by other ribosomal proteins, e.g. L4, L17, and L20. It is important during the early stages of 50S assembly. It makes multiple contacts with different domains of the 23S rRNA in the assembled 50S subunit and ribosome. The globular domain of the protein is located near the polypeptide exit tunnel on the outside of the subunit, while an extended beta-hairpin is found that lines the wall of the exit tunnel in the center of the 70S ribosome. This is Large ribosomal subunit protein uL22 from Prochlorococcus marinus (strain MIT 9312).